Reading from the N-terminus, the 425-residue chain is L-cysteine:1D-myo-inositol 2-amino-2-deoxy-alpha-D-glucopyranoside ligase (425 aa).

Residue C43 coordinates Zn(2+). Residues 43-46 (CGIT), S58, and 81-83 (NVT) each bind L-cysteinyl-5'-AMP. Residues 45 to 55 (ITPYDATHMGH) carry the 'HIGH' region motif. The 'ERGGDP' region signature appears at 199–204 (ERGGDP). An L-cysteinyl-5'-AMP-binding site is contributed by W240. C244 contacts Zn(2+). Residue 262-264 (GSD) coordinates L-cysteinyl-5'-AMP. A Zn(2+)-binding site is contributed by H269. V295 is a binding site for L-cysteinyl-5'-AMP. The 'KMSKS' region motif lies at 301–305 (KMSKS).

Belongs to the class-I aminoacyl-tRNA synthetase family. MshC subfamily. Monomer. Requires Zn(2+) as cofactor.

The catalysed reaction is 1D-myo-inositol 2-amino-2-deoxy-alpha-D-glucopyranoside + L-cysteine + ATP = 1D-myo-inositol 2-(L-cysteinylamino)-2-deoxy-alpha-D-glucopyranoside + AMP + diphosphate + H(+). Catalyzes the ATP-dependent condensation of GlcN-Ins and L-cysteine to form L-Cys-GlcN-Ins. The sequence is that of L-cysteine:1D-myo-inositol 2-amino-2-deoxy-alpha-D-glucopyranoside ligase from Paenarthrobacter aurescens (strain TC1).